We begin with the raw amino-acid sequence, 284 residues long: Bifunctional protein FolD (284 aa).

Residues 166–168 (GAS) and Ile232 contribute to the NADP(+) site.

The protein belongs to the tetrahydrofolate dehydrogenase/cyclohydrolase family. As to quaternary structure, homodimer.

It carries out the reaction (6R)-5,10-methylene-5,6,7,8-tetrahydrofolate + NADP(+) = (6R)-5,10-methenyltetrahydrofolate + NADPH. It catalyses the reaction (6R)-5,10-methenyltetrahydrofolate + H2O = (6R)-10-formyltetrahydrofolate + H(+). The protein operates within one-carbon metabolism; tetrahydrofolate interconversion. In terms of biological role, catalyzes the oxidation of 5,10-methylenetetrahydrofolate to 5,10-methenyltetrahydrofolate and then the hydrolysis of 5,10-methenyltetrahydrofolate to 10-formyltetrahydrofolate. This Pseudomonas aeruginosa (strain LESB58) protein is Bifunctional protein FolD.